The sequence spans 287 residues: Large ribosomal subunit protein uL5m (287 aa).

The transit peptide at 1–18 (MLGIRKNIRISVNFLQRR) directs the protein to the mitochondrion. Residues 80–89 (DEHTQKDRLP) are compositionally biased toward basic and acidic residues. The tract at residues 80–109 (DEHTQKDRLPRWIGDNPYYKNRPPQKMRGN) is disordered.

Belongs to the universal ribosomal protein uL5 family. In terms of assembly, component of the mitochondrial large ribosomal subunit (mt-LSU). Mature yeast 74S mitochondrial ribosomes consist of a small (37S) and a large (54S) subunit. The 37S small subunit contains a 15S ribosomal RNA (15S mt-rRNA) and at least 32 different proteins. The 54S large subunit contains a 21S rRNA (21S mt-rRNA) and at least 45 different proteins. Unlike bacterial L5, uL5m does not bind zinc.

The protein localises to the mitochondrion. Functionally, component of the mitochondrial ribosome (mitoribosome), a dedicated translation machinery responsible for the synthesis of mitochondrial genome-encoded proteins, including at least some of the essential transmembrane subunits of the mitochondrial respiratory chain. The mitoribosomes are attached to the mitochondrial inner membrane and translation products are cotranslationally integrated into the membrane. This chain is Large ribosomal subunit protein uL5m (mrpl7), found in Schizosaccharomyces pombe (strain 972 / ATCC 24843) (Fission yeast).